Consider the following 51-residue polypeptide: Large ribosomal subunit protein eL39 (51 aa).

A disordered region spans residues 32–51; sequence KRRVTRSPTRRHWRRVKLKA.

The protein belongs to the eukaryotic ribosomal protein eL39 family.

The polypeptide is Large ribosomal subunit protein eL39 (Pyrobaculum arsenaticum (strain DSM 13514 / JCM 11321 / PZ6)).